The chain runs to 330 residues: Aspartate--ammonia ligase (330 aa).

This sequence belongs to the class-II aminoacyl-tRNA synthetase family. AsnA subfamily.

It localises to the cytoplasm. It catalyses the reaction L-aspartate + NH4(+) + ATP = L-asparagine + AMP + diphosphate + H(+). It functions in the pathway amino-acid biosynthesis; L-asparagine biosynthesis; L-asparagine from L-aspartate (ammonia route): step 1/1. The chain is Aspartate--ammonia ligase from Mannheimia succiniciproducens (strain KCTC 0769BP / MBEL55E).